We begin with the raw amino-acid sequence, 787 residues long: Integrin beta-6 (787 aa).

Positions 1–21 (MGIELLCLFFLFLGRNDHVQG) are cleaved as a signal peptide. The PSI domain maps to 22 to 71 (GCAMGGAETCEDCLLIGPQCAWCSQENFTHLSGVGERCDTPANLLAKGCQ). Over 22 to 708 (GCAMGGAETC…KDCPKPPNIP (687 aa)) the chain is Extracellular. 19 disulfides stabilise this stretch: Cys23–Cys41, Cys31–Cys454, Cys34–Cys59, Cys44–Cys70, Cys197–Cys204, Cys252–Cys293, Cys394–Cys406, Cys426–Cys452, Cys456–Cys476, Cys467–Cys479, Cys481–Cys490, Cys492–Cys519, Cys502–Cys517, Cys511–Cys522, Cys524–Cys537, Cys539–Cys560, Cys544–Cys558, Cys552–Cys563, and Cys565–Cys574. N-linked (GlcNAc...) asparagine glycans are attached at residues Asn48 and Asn97. In terms of domain architecture, VWFA spans 131 to 371 (YPVDLYYLMD…QLIISAYEEL (241 aa)). Mg(2+) is bound by residues Asp140, Ser142, and Ser144. Ser144, Asp147, Asp148, and Glu179 together coordinate Ca(2+). The Ca(2+) site is built by Asn235, Asp237, Pro239, and Glu240. Glu240 is a binding site for Mg(2+). An N-linked (GlcNAc...) asparagine glycan is attached at Asn260. Residues Asp271 and Lys355 each coordinate Ca(2+). Asn387 carries an N-linked (GlcNAc...) asparagine glycan. The N-linked (GlcNAc...) asparagine glycan is linked to Asn418. I-EGF domains lie at 456–491 (CQKE…HHCE), 492–538 (CGED…PYCQ), 539–575 (CDNF…EYCN), and 576–615 (CTTS…PACE). N-linked (GlcNAc...) asparagine glycosylation is found at Asn463 and Asn471. N-linked (GlcNAc...) asparagine glycosylation occurs at Asn541. Asn575 carries N-linked (GlcNAc...) asparagine glycosylation. 9 disulfide bridges follow: Cys576/Cys599, Cys583/Cys597, Cys591/Cys602, Cys604/Cys614, Cys617/Cys620, Cys624/Cys670, Cys630/Cys649, Cys633/Cys645, and Cys678/Cys701. The chain crosses the membrane as a helical span at residues 709–729 (MIMLGVSLAILLIGVALLCIW). Positions 730-757 (KLLVSFHDRKEVAKFEAERSKAKWQTGT) are interaction with HAX1. The Cytoplasmic segment spans residues 730-787 (KLLVSFHDRKEVAKFEAERSKAKWQTGTNPLYRGSTSTFKNVTYKHKEKQKVDLSTDG).

The protein belongs to the integrin beta chain family. Heterodimer of an alpha and a beta subunit. Interacts with FLNB. Interacts with HAX1. ITGAV:ITGB6 interacts with FBN1. ITGAV:ITGB6 interacts with TGFB1.

Its subcellular location is the cell membrane. The protein resides in the cell junction. The protein localises to the focal adhesion. Functionally, integrin alpha-V:beta-6 (ITGAV:ITGB6) is a receptor for fibronectin and cytotactin. It recognizes the sequence R-G-D in its ligands. ITGAV:ITGB6 acts as a receptor for fibrillin-1 (FBN1) and mediates R-G-D-dependent cell adhesion to FBN1. Integrin alpha-V:beta-6 (ITGAV:ITGB6) mediates R-G-D-dependent release of transforming growth factor beta-1 (TGF-beta-1) from regulatory Latency-associated peptide (LAP), thereby playing a key role in TGF-beta-1 activation. This Ovis aries (Sheep) protein is Integrin beta-6 (ITGB6).